Reading from the N-terminus, the 155-residue chain is Fibroblast growth factor 2 (155 aa).

Residues 1–9 (MAAGSITTL) constitute a propeptide that is removed on maturation. A disordered region spans residues 1–20 (MAAGSITTLPALPEDGGSGA). A heparin-binding site is contributed by asparagine 36. A Cell attachment site; atypical motif is present at residues 46–48 (DGR). Tyrosine 82 carries the phosphotyrosine; by TEC modification. A Cell attachment site; atypical motif is present at residues 88 to 90 (DGR). Lysine 95 participates in a covalent cross-link: Glycyl lysine isopeptide (Lys-Gly) (interchain with G-Cter in SUMO1). The tract at residues 128 to 144 (KRTGQYKLGPKTGPGQK) is heparin-binding.

It belongs to the heparin-binding growth factors family. Monomer. Homodimer. Interacts with FGFR1, FGFR2, FGFR3 and FGFR4. Affinity between fibroblast growth factors (FGFs) and their receptors is increased by heparan sulfate glycosaminoglycans that function as coreceptors. Interacts with CSPG4, FGFBP1 and TEC. Found in a complex with FGFBP1, FGF1 and FGF2. Interacts with FGFBP3. Interacts with integrin ITGAV:ITGB3; the interaction is required for FGF2 signaling. Interacts with SNORC (via the extracellular domain). Interacts with glypican GPC3. Post-translationally, phosphorylation at Tyr-82 regulates FGF2 unconventional secretion.

The protein localises to the secreted. The protein resides in the nucleus. Acts as a ligand for FGFR1, FGFR2, FGFR3 and FGFR4. Also acts as an integrin ligand which is required for FGF2 signaling. Binds to integrin ITGAV:ITGB3. Plays an important role in the regulation of cell survival, cell division, cell differentiation and cell migration. Functions as a potent mitogen in vitro. Can induce angiogenesis. Mediates phosphorylation of ERK1/2 and thereby promotes retinal lens fiber differentiation. The sequence is that of Fibroblast growth factor 2 (FGF2) from Bos taurus (Bovine).